Here is a 257-residue protein sequence, read N- to C-terminus: Flap endonuclease Xni (257 aa).

Residue aspartate 109 coordinates Mg(2+). The 90-residue stretch at 165–254 (VKPEQLADYW…GFNLQDIRYE (90 aa)) folds into the 5'-3' exonuclease domain. Residues leucine 176, proline 185, isoleucine 187, and isoleucine 190 each contribute to the K(+) site. Residues 189–194 (GIGPKA) form an interaction with DNA region.

Belongs to the Xni family. Requires Mg(2+) as cofactor. K(+) serves as cofactor.

Functionally, has flap endonuclease activity. During DNA replication, flap endonucleases cleave the 5'-overhanging flap structure that is generated by displacement synthesis when DNA polymerase encounters the 5'-end of a downstream Okazaki fragment. The polypeptide is Flap endonuclease Xni (Vibrio atlanticus (strain LGP32) (Vibrio splendidus (strain Mel32))).